A 280-amino-acid chain; its full sequence is Octanoyl-[GcvH]:protein N-octanoyltransferase (280 aa).

Residues 40–245 (QERGAVLRAW…VLSTVSLLQN (206 aa)) enclose the BPL/LPL catalytic domain. Catalysis depends on cysteine 144, which acts as the Acyl-thioester intermediate.

This sequence belongs to the octanoyltransferase LipL family.

The catalysed reaction is N(6)-octanoyl-L-lysyl-[glycine-cleavage complex H protein] + L-lysyl-[lipoyl-carrier protein] = N(6)-octanoyl-L-lysyl-[lipoyl-carrier protein] + L-lysyl-[glycine-cleavage complex H protein]. The protein operates within protein modification; protein lipoylation via endogenous pathway; protein N(6)-(lipoyl)lysine from octanoyl-[acyl-carrier-protein]. Its function is as follows. Catalyzes the amidotransfer (transamidation) of the octanoyl moiety from octanoyl-GcvH to the lipoyl domain of the E2 subunit of lipoate-dependent enzymes. This Exiguobacterium sp. (strain ATCC BAA-1283 / AT1b) protein is Octanoyl-[GcvH]:protein N-octanoyltransferase.